The chain runs to 143 residues: Transcriptional regulator MraZ (143 aa).

2 consecutive SpoVT-AbrB domains span residues 5-47 and 76-119; these read EYHH…SMEE and AMES…AKER.

This sequence belongs to the MraZ family. Forms oligomers.

Its subcellular location is the cytoplasm. The protein resides in the nucleoid. The polypeptide is Transcriptional regulator MraZ (Lactobacillus helveticus (strain DPC 4571)).